A 283-amino-acid chain; its full sequence is MNPSDTHDHGAEASPLGQSVVYRDSYAPELLFPIARQIKRDELGLAPDTLPFVGEDLWNAYELSWLNSRGKPVAAIGTFRVPVTSPRLIESKSLKLYLNSFNQHRFVDPTLVHDTLTRDLSTAAGAPVAVSIEVLSRRPTRVFGYPHGVLLDEIDIEIDTYRTDPAFLQSDFNADEVSETLYSHLLKSNCLVTGQPDWGTIVLRYIGPPIDRAGLLRYIVSFRSHNEFHEQCVERIFCDVLRRCAPRHLAVWARYTRRGGLDINPFRSTGHFTQFDNIAEVRQ.

Residue 89 to 91 (IES) participates in substrate binding. Residue 91 to 92 (SK) participates in NADPH binding. The active-site Thioimide intermediate is the Cys190. Catalysis depends on Asp197, which acts as the Proton donor. 229–230 (HE) contributes to the substrate binding site. NADPH is bound at residue 258–259 (RG).

The protein belongs to the GTP cyclohydrolase I family. QueF type 2 subfamily. As to quaternary structure, homodimer.

It is found in the cytoplasm. It carries out the reaction 7-aminomethyl-7-carbaguanine + 2 NADP(+) = 7-cyano-7-deazaguanine + 2 NADPH + 3 H(+). Its pathway is tRNA modification; tRNA-queuosine biosynthesis. Functionally, catalyzes the NADPH-dependent reduction of 7-cyano-7-deazaguanine (preQ0) to 7-aminomethyl-7-deazaguanine (preQ1). In Aromatoleum aromaticum (strain DSM 19018 / LMG 30748 / EbN1) (Azoarcus sp. (strain EbN1)), this protein is NADPH-dependent 7-cyano-7-deazaguanine reductase.